Consider the following 233-residue polypeptide: Beta-fibrinogenase brevinase (233 aa).

Residues 1 to 224 (VIGGDECNIN…YIDWIQSIIA (224 aa)) form the Peptidase S1 domain. 6 cysteine pairs are disulfide-bonded: Cys-7–Cys-138, Cys-25–Cys-41, Cys-73–Cys-231, Cys-117–Cys-185, Cys-149–Cys-164, and Cys-175–Cys-200. The Charge relay system role is filled by His-40. Asn-54 carries an N-linked (GlcNAc...) asparagine glycan. Asp-85 (charge relay system) is an active-site residue. Asn-129 carries N-linked (GlcNAc...) asparagine glycosylation. The short motif at 176 to 178 (RGD) is the Cell attachment site element. Ser-179 acts as the Charge relay system in catalysis. An N-linked (GlcNAc...) asparagine glycan is attached at Asn-226.

Belongs to the peptidase S1 family. Snake venom subfamily. As to quaternary structure, heterodimer of the brevinase A chain and the brevinase B chain. In terms of tissue distribution, expressed by the venom gland.

The protein localises to the secreted. The fibrinolytic activity is completely inhibited by PMSF, diisopropylfluorophosphate (DFP), pefabloc, dithiothreitol (DTT) and Zn(2+), but not by Pepstatin A, E64, iodoacetate, chymostatin, tosyl-Lphenylalanine chloromethyl ketone (TPCK), soybean trypsin inhibitor (SBTI), phosphoramidon, Ca(2+), Co(2+), Cu(2+), Fe(2+), Mg(2+), Mn(2+), K(+), and Na(+). In terms of biological role, snake venom serine protease that has fibrinogenolytic activities. Preferentially cleaves the Bbeta-chain (FGB) and more slowly the Aa-chain (FGA) of fibrinogen, but does not affect the gamma-chain. Also has fibrinolytic activity. May play a role in antithrombotic reaction as well as thrombolytic reaction. The sequence is that of Beta-fibrinogenase brevinase from Gloydius blomhoffii (Mamushi).